A 400-amino-acid chain; its full sequence is Subtilisin-like protease 11 (400 aa).

An N-terminal signal peptide occupies residues Met1 to Ala19. Residues Ala20 to Ser117 constitute a propeptide that is removed on maturation. The Inhibitor I9 domain occupies Ser35–Ile116. The Peptidase S8 domain maps to Ser127–Lys400. Asn138 carries N-linked (GlcNAc...) asparagine glycosylation. The active-site Charge relay system is the Asp159. N-linked (GlcNAc...) asparagine glycosylation is present at Asn181. The active-site Charge relay system is His191. N-linked (GlcNAc...) asparagine glycosylation is found at Asn252 and Asn337. The active-site Charge relay system is the Ser346. Asn388 and Asn396 each carry an N-linked (GlcNAc...) asparagine glycan.

Belongs to the peptidase S8 family.

The protein resides in the secreted. In terms of biological role, secreted subtilisin-like serine protease with keratinolytic activity that contributes to pathogenicity. This chain is Subtilisin-like protease 11 (SUB11), found in Trichophyton verrucosum (strain HKI 0517).